The following is a 919-amino-acid chain: Kinesin-like protein KIN-6 (919 aa).

A disordered region spans residues 1-59; it reads MVRLSTKPPNPKVEMNLKEPPITGAGAGAAASPPAPSTLRRNPPRSARPPPTPLPNSKP. Low complexity predominate over residues 28–45; the sequence is GAAASPPAPSTLRRNPPR. A compositionally biased stretch (pro residues) spans 46 to 56; that stretch reads SARPPPTPLPN. Positions 72 to 415 constitute a Kinesin motor domain; it reads RLKVFLRIRP…LRQASPYMKI (344 aa). Residue 171–178 participates in ATP binding; sequence GPTGSGKT. Disordered regions lie at residues 591–615, 674–700, 711–730, 737–764, and 886–919; these read EEVS…TGTG, SESC…SFTD, SPQF…EEER, TTEG…EVNS, and KEEK…GRAQ. Positions 597–612 are enriched in basic and acidic residues; sequence STGHGPERSSDYDDKT. Residues 685 to 697 are compositionally biased toward low complexity; the sequence is HSSSSLDHPSDQS. Positions 755 to 764 are enriched in polar residues; the sequence is TPSCSQEVNS. Residues 886 to 912 are compositionally biased toward basic and acidic residues; the sequence is KEEKVKSSRDAMGRSDKLIRLLTDHPP.

It belongs to the TRAFAC class myosin-kinesin ATPase superfamily. Kinesin family. KIN-6 subfamily.

The protein is Kinesin-like protein KIN-6 of Oryza sativa subsp. japonica (Rice).